We begin with the raw amino-acid sequence, 230 residues long: NAD(P)H-hydrate epimerase (230 aa).

The YjeF N-terminal domain occupies 11-218; it reads AIDVDQELFT…ALQRKYGLNL (208 aa). (6S)-NADPHX is bound at residue 61 to 65; it reads NNGGD. The K(+) site is built by asparagine 62 and aspartate 126. (6S)-NADPHX is bound by residues 130-136 and aspartate 159; that span reads GFSFKPP. K(+) is bound at residue serine 162.

The protein belongs to the NnrE/AIBP family. It depends on K(+) as a cofactor.

The catalysed reaction is (6R)-NADHX = (6S)-NADHX. It catalyses the reaction (6R)-NADPHX = (6S)-NADPHX. Catalyzes the epimerization of the S- and R-forms of NAD(P)HX, a damaged form of NAD(P)H that is a result of enzymatic or heat-dependent hydration. This is a prerequisite for the S-specific NAD(P)H-hydrate dehydratase to allow the repair of both epimers of NAD(P)HX. The chain is NAD(P)H-hydrate epimerase from Drosophila yakuba (Fruit fly).